Reading from the N-terminus, the 146-residue chain is Holo-[acyl-carrier-protein] synthase (146 aa).

Residues aspartate 8 and glutamate 61 each coordinate Mg(2+).

It belongs to the P-Pant transferase superfamily. AcpS family. It depends on Mg(2+) as a cofactor.

Its subcellular location is the cytoplasm. The enzyme catalyses apo-[ACP] + CoA = holo-[ACP] + adenosine 3',5'-bisphosphate + H(+). Functionally, transfers the 4'-phosphopantetheine moiety from coenzyme A to a Ser of acyl-carrier-protein. In Rhodopseudomonas palustris (strain TIE-1), this protein is Holo-[acyl-carrier-protein] synthase.